Reading from the N-terminus, the 151-residue chain is Large ribosomal subunit protein bL9 (151 aa).

This sequence belongs to the bacterial ribosomal protein bL9 family.

Functionally, binds to the 23S rRNA. The protein is Large ribosomal subunit protein bL9 of Chlorobium phaeovibrioides (strain DSM 265 / 1930) (Prosthecochloris vibrioformis (strain DSM 265)).